Here is a 325-residue protein sequence, read N- to C-terminus: MDKSSGELVTLTPNNNNTVQPVALMRLGVFVPTLKSLKNSKKNTLSRTDATEELTRLSLARAEGFDKVEITGPRLDMDNDFKTWVGIIHSFARHNVIGDKVELPFVEFAKLCGIPSSQSSRRLRERISPSLKRIAGTVISFSRTDEKHTREYITHLVQSAYYDTERDIVQLQADPRLFELYQFDRKVLLQLKAINALKRRESAQALYTFIESLPRDPAPISLARLRARLNLKSPVFSQNQTVRRAMEQLREIGYLDYTEIQRGRTKFFCIHYRRPRLKAPNDESKENPLQPSPAEKVSPEMAEKLALLEKLGITLDDLEKLFKSR.

A disordered region spans residues 279–298 (APNDESKENPLQPSPAEKVS).

It belongs to the initiator RepB protein family.

Its function is as follows. This protein is essential for plasmid replication; it is involved in copy control functions. In vitro, binds to the DNA repeat units, BCDD'D'', EFG and HIJ. This chain is RepFIB replication protein A (repA), found in Escherichia coli.